Reading from the N-terminus, the 507-residue chain is ATP synthase subunit alpha (507 aa).

170 to 177 (GDRKTGKT) serves as a coordination point for ATP.

Belongs to the ATPase alpha/beta chains family. In terms of assembly, F-type ATPases have 2 components, CF(1) - the catalytic core - and CF(0) - the membrane proton channel. CF(1) has five subunits: alpha(3), beta(3), gamma(1), delta(1), epsilon(1). CF(0) has three main subunits: a(1), b(2) and c(9-12). The alpha and beta chains form an alternating ring which encloses part of the gamma chain. CF(1) is attached to CF(0) by a central stalk formed by the gamma and epsilon chains, while a peripheral stalk is formed by the delta and b chains.

The protein resides in the cell inner membrane. The enzyme catalyses ATP + H2O + 4 H(+)(in) = ADP + phosphate + 5 H(+)(out). In terms of biological role, produces ATP from ADP in the presence of a proton gradient across the membrane. The alpha chain is a regulatory subunit. The polypeptide is ATP synthase subunit alpha (Anaplasma marginale (strain Florida)).